Here is a 261-residue protein sequence, read N- to C-terminus: tRNA threonylcarbamoyladenosine dehydratase (261 aa).

A helical membrane pass occupies residues 230-250; sequence CANGFGAATMITATFGFFAVS.

The protein belongs to the HesA/MoeB/ThiF family.

The protein resides in the membrane. Its function is as follows. Catalyzes the ATP-dependent dehydration of threonylcarbamoyladenosine at position 37 (t(6)A37) to form cyclic t(6)A37 (ct(6)A37) in tRNAs that read codons beginning with adenine. This chain is tRNA threonylcarbamoyladenosine dehydratase (tcdA), found in Haemophilus influenzae (strain ATCC 51907 / DSM 11121 / KW20 / Rd).